The chain runs to 328 residues: uncharacterized protein (328 aa).

An N-terminal signal peptide occupies residues 1–24 (MKSIKGLGKLLLASSILFSSSAFA).

The protein belongs to the bacterial solute-binding protein 7 family.

The protein localises to the periplasm. This is an uncharacterized protein from Haemophilus influenzae (strain ATCC 51907 / DSM 11121 / KW20 / Rd).